The primary structure comprises 477 residues: Adenylyl cyclase-associated protein 2 (477 aa).

Residue A2 is modified to N-acetylalanine. Disordered stretches follow at residues 224–262 (SILS…PSRS) and 274–324 (ITKG…HAPV). Positions 231-248 (GLPPPPPPPPPPGPPPPF) are enriched in pro residues. Low complexity predominate over residues 300 to 318 (RSPTKTRTPSPTSSKSNSP). Phosphoserine occurs at positions 301 and 309. In terms of domain architecture, C-CAP/cofactor C-like spans 318-455 (PQKHAPVLEL…QGDDYREFPI (138 aa)).

This sequence belongs to the CAP family. Found at relatively high levels in testes, at moderate levels in brain, heart and skeletal muscle, at lower levels in lung, skin, kidney and small intestine, and is undetectable in liver or spleen.

The protein resides in the cell membrane. Involved in the regulation of actin polymerization. The protein is Adenylyl cyclase-associated protein 2 (Cap2) of Rattus norvegicus (Rat).